The primary structure comprises 407 residues: Putative replication protein A (407 aa).

Belongs to the ParA family.

The chain is Putative replication protein A from Sinorhizobium fredii (strain NBRC 101917 / NGR234).